The chain runs to 270 residues: 2-C-methyl-D-erythritol 4-phosphate cytidylyltransferase (270 aa).

The disordered stretch occupies residues 1–33 (MSDESRPSPAETPATTFAETSAETSAAGRSPAR). The segment covering 7–27 (PSPAETPATTFAETSAETSAA) has biased composition (low complexity).

This sequence belongs to the IspD/TarI cytidylyltransferase family. IspD subfamily.

The enzyme catalyses 2-C-methyl-D-erythritol 4-phosphate + CTP + H(+) = 4-CDP-2-C-methyl-D-erythritol + diphosphate. It participates in isoprenoid biosynthesis; isopentenyl diphosphate biosynthesis via DXP pathway; isopentenyl diphosphate from 1-deoxy-D-xylulose 5-phosphate: step 2/6. Its function is as follows. Catalyzes the formation of 4-diphosphocytidyl-2-C-methyl-D-erythritol from CTP and 2-C-methyl-D-erythritol 4-phosphate (MEP). This is 2-C-methyl-D-erythritol 4-phosphate cytidylyltransferase from Streptomyces coelicolor (strain ATCC BAA-471 / A3(2) / M145).